The chain runs to 283 residues: Glutamate racemase (283 aa).

Substrate-binding positions include 7–8 and 39–40; these read DS and YG. Cys-70 (proton donor/acceptor) is an active-site residue. 71-72 is a substrate binding site; the sequence is NT. Cys-206 serves as the catalytic Proton donor/acceptor. 207–208 provides a ligand contact to substrate; sequence TH.

This sequence belongs to the aspartate/glutamate racemases family.

It catalyses the reaction L-glutamate = D-glutamate. It functions in the pathway cell wall biogenesis; peptidoglycan biosynthesis. Provides the (R)-glutamate required for cell wall biosynthesis. The protein is Glutamate racemase of Phenylobacterium zucineum (strain HLK1).